A 68-amino-acid chain; its full sequence is MTPALYRVRQPFFWRNTISLFVIGSIPLAAYWYTFTKMTEDEFSDIPIPPISDEELTKLKKEYEAGKQ.

Topologically, residues 1–11 (MTPALYRVRQP) are mitochondrial matrix. The chain crosses the membrane as a helical span at residues 12-34 (FFWRNTISLFVIGSIPLAAYWYT). At 35–68 (FTKMTEDEFSDIPIPPISDEELTKLKKEYEAGKQ) the chain is on the mitochondrial intermembrane side.

The protein belongs to the COA3 family. In terms of assembly, component of 250-400 kDa complexes called cytochrome oxidase assembly intermediates or COA complexes.

It localises to the mitochondrion inner membrane. Required for assembly of cytochrome c oxidase (complex IV). This Lodderomyces elongisporus (strain ATCC 11503 / CBS 2605 / JCM 1781 / NBRC 1676 / NRRL YB-4239) (Yeast) protein is Cytochrome c oxidase assembly factor 3, mitochondrial (COA3).